We begin with the raw amino-acid sequence, 984 residues long: E3 ubiquitin-protein ligase BRE1A (984 aa).

The interval 1–34 is disordered; sequence MSGAGNKRAAGEPGPSAPPEKKAGVEDSGTTVET. Residues 43–90 adopt a coiled-coil conformation; the sequence is TEELDIRTLQTKNRKLAEMLDQRQAIEDELREHIEKLERRQATDDASL. The interval 128–150 is disordered; that stretch reads VVPEPEPDSDSNQERKDERERGE. Residues 139–150 show a composition bias toward basic and acidic residues; the sequence is NQERKDERERGE. Coiled coils occupy residues 236–378 and 429–907; these read ADTL…VKET and SLHK…TTKK. The disordered stretch occupies residues 506-632; it reads SDLSKIRSRS…KHEDGRKKEA (127 aa). Residues 514-526 show a composition bias toward polar residues; it reads RSGSALLQSQSST. Composition is skewed to basic and acidic residues over residues 527 to 540 and 558 to 632; these read EDTK…KQEP and SEVK…KKEA. An RING-type zinc finger spans residues 931 to 970; that stretch reads CPCCNMRKKDAVLTKCFHVFCFECVKTRYDTRQRKCPKCN.

Belongs to the BRE1 family. In terms of assembly, component of the RNF20/40 complex (also known as BRE1 complex).

Its subcellular location is the nucleus. It catalyses the reaction S-ubiquitinyl-[E2 ubiquitin-conjugating enzyme]-L-cysteine + [acceptor protein]-L-lysine = [E2 ubiquitin-conjugating enzyme]-L-cysteine + N(6)-ubiquitinyl-[acceptor protein]-L-lysine.. Its pathway is protein modification; protein ubiquitination. Component of the RNF20/40 E3 ubiquitin-protein ligase complex that mediates monoubiquitination of 'Lys-120' of histone H2B (H2BK120ub1). H2BK120ub1 gives a specific tag for epigenetic transcriptional activation and is also prerequisite for histone H3 'Lys-4' and 'Lys-79' methylation (H3K4me and H3K79me, respectively). The protein is E3 ubiquitin-protein ligase BRE1A (RNF20) of Gallus gallus (Chicken).